The following is a 281-amino-acid chain: Ras-related protein Rab-40C (281 aa).

Residues serine 23, glycine 26, lysine 27, and serine 46 each contribute to the GTP site. Residues 41–49 form a switch-I region; that stretch reads SPYAYSNGI. Residues serine 46 and aspartate 69 each contribute to the Mg(2+) site. The GTP site is built by glycine 72, asparagine 126, and arginine 127. Positions 72-88 are switch-II; it reads GQGRFCTIFRSYSRGAQ. An SOCS box domain is found at 175 to 228; sequence LMRHGMEKIWRPNRVFSLQDLCCRAIVSCTPVHLIDKLPLPVTIKSHLKSFSMA. The segment at 245-281 is disordered; it reads SGAGGGGSKGNSLKRSKSIRPPQSPPQNCSRSNCKIS. A compositionally biased stretch (polar residues) spans 270–281; it reads PQNCSRSNCKIS. Cysteine 273 carries the S-palmitoyl cysteine lipid modification. A lipid anchor (S-geranylgeranyl cysteine) is attached at cysteine 278.

Belongs to the small GTPase superfamily. Rab family. Component of the cullin-5-RING E3 ubiquitin-protein ligase complex (ECS(RAB40C) complex) composed of CUL5, Elongin BC (ELOB and ELOC), RNF7/RBX2 and RAB40C. Interacts with protein phosphatase 6 (PP6) complex components ANKRD28, ANKRD52, PPP6C, PP6R1 and PP6R2; the interaction leads to ANKRD28 ubiquitination and decreased PP6 activity. Interacts with DAB2IP; DAB2IP acts as a GAP for RAB40C. Mg(2+) serves as cofactor.

The protein localises to the cell membrane. Its subcellular location is the cytoplasm. It localises to the cytosol. The protein resides in the golgi apparatus membrane. The enzyme catalyses GTP + H2O = GDP + phosphate + H(+). It functions in the pathway protein modification; protein ubiquitination. With respect to regulation, regulated by guanine nucleotide exchange factors (GEFs) which promote the exchange of bound GDP for free GTP. Regulated by GTPase activating proteins (GAPs) including DAB2IP, which increase the GTP hydrolysis activity. Inhibited by GDP dissociation inhibitors (GDIs). In terms of biological role, RAB40C small GTPase acts as substrate-recognition component of the ECS(RAB40C) E3 ubiquitin ligase complex which mediates the ubiquitination and subsequent proteasomal degradation of target proteins. The Rab40 subfamily belongs to the Rab family that are key regulators of intracellular membrane trafficking, from the formation of transport vesicles to their fusion with membranes. Rabs cycle between an inactive GDP-bound form and an active GTP-bound form that is able to recruit to membranes different sets of downstream effectors directly responsible for vesicle formation, movement, tethering and fusion. As part of the ECS(RAB40C) complex, mediates ANKRD28 ubiquitination and degradation, thereby inhibiting protein phosphatase 6 (PP6) complex activity and focal adhesion assembly during cell migration. Also negatively regulate lipid droplets accumulation in a GTP-dependent manner. The sequence is that of Ras-related protein Rab-40C from Homo sapiens (Human).